The chain runs to 487 residues: MKKLPNKSLIALALLSVSGASFGHGYVSAYENGVAEGRATLCRVPANDTNEKNTNCGGIEYEPQSVEGPDGFPETGPRDGKIASAENSLAAALDEQTADRWVKRPIQSGNQHFEWNFTANHITKDWKYYITKADWNPNQPLARDSFDLNPFCVVDGGMVKPPMRVSHLCNVPEREGYQVILAVWDVGDTAASFYNVIDVKFDGDSPVLPDWNQGGQIYPSQDLNVGDSVYTRVFGQNGENVSYSTELVIDSEELGAANNWSHALATKINQEQTMLQAGQLNAEGVISPIYGTNPIYLKQGSGLKNVEIDYKINSTAPEYDLEVYGLESEYIIGDSATQLDLTLEATGDIKTEMTVYNHHHESLSSHSAELSDGQVEAATMTLSKSEPGHHMLVVVVKDQQGKVIEQNTLDFHLIEEQTPPPSGEYDFVFPEGLNTYTAGTKVLASDGAVYQCKEFPFSGYCTQWSPSATQFEPGKGSHWSEAWNKVN.

The first 29 residues, 1–29, serve as a signal peptide directing secretion; it reads MKKLPNKSLIALALLSVSGASFGHGYVSA. The Chitin-binding type-4 domain occupies 30–201; it reads YENGVAEGRA…SFYNVIDVKF (172 aa). A Chitin-binding type-3 domain is found at 438–479; sequence AGTKVLASDGAVYQCKEFPFSGYCTQWSPSATQFEPGKGSHW.

Belongs to the GbpA family.

It is found in the secreted. Functionally, probably interacts with GlcNAc residues. May promote attachment to both epithelial cell surfaces and chitin. This Vibrio campbellii (strain ATCC BAA-1116) protein is GlcNAc-binding protein A.